Consider the following 161-residue polypeptide: Crossover junction endodeoxyribonuclease RuvC (161 aa).

Residues Asp7, Glu67, and Asp139 contribute to the active site. Mg(2+)-binding residues include Asp7, Glu67, and Asp139.

Belongs to the RuvC family. As to quaternary structure, homodimer which binds Holliday junction (HJ) DNA. The HJ becomes 2-fold symmetrical on binding to RuvC with unstacked arms; it has a different conformation from HJ DNA in complex with RuvA. In the full resolvosome a probable DNA-RuvA(4)-RuvB(12)-RuvC(2) complex forms which resolves the HJ. Mg(2+) serves as cofactor.

The protein localises to the cytoplasm. The catalysed reaction is Endonucleolytic cleavage at a junction such as a reciprocal single-stranded crossover between two homologous DNA duplexes (Holliday junction).. Its function is as follows. The RuvA-RuvB-RuvC complex processes Holliday junction (HJ) DNA during genetic recombination and DNA repair. Endonuclease that resolves HJ intermediates. Cleaves cruciform DNA by making single-stranded nicks across the HJ at symmetrical positions within the homologous arms, yielding a 5'-phosphate and a 3'-hydroxyl group; requires a central core of homology in the junction. The consensus cleavage sequence is 5'-(A/T)TT(C/G)-3'. Cleavage occurs on the 3'-side of the TT dinucleotide at the point of strand exchange. HJ branch migration catalyzed by RuvA-RuvB allows RuvC to scan DNA until it finds its consensus sequence, where it cleaves and resolves the cruciform DNA. This chain is Crossover junction endodeoxyribonuclease RuvC, found in Syntrophotalea carbinolica (strain DSM 2380 / NBRC 103641 / GraBd1) (Pelobacter carbinolicus).